Here is a 476-residue protein sequence, read N- to C-terminus: MSQATVEEKSKLRVIIVGGSVAGLTLAHCLAKANIDHIVLEKRAEISPQEGAFIGIWPNGARIFDQLGLYEDFESLTPPVHRMNVRFPDGFTFSSYLPRTIQERFGYPIISIDRQKVLETLYERYPHKSNVLVNKKVMNVRFSGKGVSVVTEDGSAYDGDLVVGADGIHSRIRSEMWRLADENHPGLITSQDKQAFTVEYACVFGISEQLPSLPAGEHINSYSNGLCVITFHGEKGRIFWFLLVKLPEKTTYPNTPRFSASDAASLCNKFARFRVSEDICVSDLWMHKLFASMTALEEGILERWHYDRIVLLGDSVHKMTPNIGQGANTALEDASVLASLLNNLSKLSTEDGTSAYAMTKLLNEYQSTRYERAKNTHDKSRFGARLHTRDDMIKTLIGRYVFPYAGPRVLERSVKSLATAHSVEYLPFPKRLGPAWGEYSSPNKSTLGSTPIHMLTLLLPCLFYFMYSKLNLFVSL.

3 residues coordinate FAD: Glu41, Gly55, and Arg114. Tyr222 is an active-site residue. FAD contacts are provided by Asp314 and Ala327. Residues 447-467 form a helical membrane-spanning segment; sequence LGSTPIHMLTLLLPCLFYFMY.

The protein belongs to the paxM FAD-dependent monooxygenase family. Requires FAD as cofactor.

It localises to the membrane. It functions in the pathway secondary metabolite biosynthesis; terpenoid biosynthesis. FAD-dependent monooxygenase; part of the gene cluster A that mediates the biosynthesis of the fungal meroterpenoid acetoxydehydroaustin. The first step of the pathway is the synthesis of 3,5-dimethylorsellinic acid by the polyketide synthase ausA. 3,5-dimethylorsellinic acid is then prenylated by the polyprenyl transferase ausN. Further epoxidation by the FAD-dependent monooxygenase ausM and cyclization by the probable terpene cyclase ausL lead to the formation of protoaustinoid A. Protoaustinoid A is then oxidized to spiro-lactone preaustinoid A3 by the combined action of the FAD-binding monooxygenases ausB and ausC, and the dioxygenase ausE. Acid-catalyzed keto-rearrangement and ring contraction of the tetraketide portion of preaustinoid A3 by ausJ lead to the formation of preaustinoid A4. The aldo-keto reductase ausK, with the help of ausH, is involved in the next step by transforming preaustinoid A4 into isoaustinone which is in turn hydroxylated by the P450 monooxygenase ausI to form austinolide. The cytochrome P450 monooxygenase ausG then modifies austinolide to austinol. Austinol is further acetylated to austin by the O-acetyltransferase ausP, which spontaneously changes to dehydroaustin. The cytochrome P450 monooxygenase then converts dehydroaustin is into 7-dehydrodehydroaustin. The hydroxylation catalyzed by ausR permits the second O-acetyltransferase ausQ to add an additional acetyl group to the molecule, leading to the formation of acetoxydehydroaustin. Due to genetic rearrangements of the clusters and the subsequent loss of some enzymes, the end product of the Penicillium brasilianum austinoid biosynthesis clusters is acetoxydehydroaustin. The protein is FAD-dependent monooxygenase ausM of Penicillium brasilianum.